We begin with the raw amino-acid sequence, 114 residues long: Large ribosomal subunit protein uL22 (114 aa).

It belongs to the universal ribosomal protein uL22 family. As to quaternary structure, part of the 50S ribosomal subunit.

Functionally, this protein binds specifically to 23S rRNA; its binding is stimulated by other ribosomal proteins, e.g. L4, L17, and L20. It is important during the early stages of 50S assembly. It makes multiple contacts with different domains of the 23S rRNA in the assembled 50S subunit and ribosome. The globular domain of the protein is located near the polypeptide exit tunnel on the outside of the subunit, while an extended beta-hairpin is found that lines the wall of the exit tunnel in the center of the 70S ribosome. The chain is Large ribosomal subunit protein uL22 from Ehrlichia canis (strain Jake).